A 110-amino-acid polypeptide reads, in one-letter code: UPF0060 membrane protein Nmul_A0351 (110 aa).

Helical transmembrane passes span 7–27 (LFLF…PYLW), 33–53 (SAWL…LLTL), 63–83 (AAYG…VDGV), and 87–107 (AWDM…MFGP).

It belongs to the UPF0060 family.

Its subcellular location is the cell inner membrane. The protein is UPF0060 membrane protein Nmul_A0351 of Nitrosospira multiformis (strain ATCC 25196 / NCIMB 11849 / C 71).